The sequence spans 245 residues: 23S rRNA (guanosine-2'-O-)-methyltransferase RlmB (245 aa).

S-adenosyl-L-methionine contacts are provided by Gly-197, Ile-217, and Leu-226.

Belongs to the class IV-like SAM-binding methyltransferase superfamily. RNA methyltransferase TrmH family. RlmB subfamily.

The protein localises to the cytoplasm. It carries out the reaction guanosine(2251) in 23S rRNA + S-adenosyl-L-methionine = 2'-O-methylguanosine(2251) in 23S rRNA + S-adenosyl-L-homocysteine + H(+). Specifically methylates the ribose of guanosine 2251 in 23S rRNA. The chain is 23S rRNA (guanosine-2'-O-)-methyltransferase RlmB from Photobacterium profundum (strain SS9).